Consider the following 371-residue polypeptide: Anhydro-N-acetylmuramic acid kinase (371 aa).

ATP is bound at residue 12–20 (GTVLDGNID).

It belongs to the anhydro-N-acetylmuramic acid kinase family.

The catalysed reaction is 1,6-anhydro-N-acetyl-beta-muramate + ATP + H2O = N-acetyl-D-muramate 6-phosphate + ADP + H(+). It participates in amino-sugar metabolism; 1,6-anhydro-N-acetylmuramate degradation. Its pathway is cell wall biogenesis; peptidoglycan recycling. Catalyzes the specific phosphorylation of 1,6-anhydro-N-acetylmuramic acid (anhMurNAc) with the simultaneous cleavage of the 1,6-anhydro ring, generating MurNAc-6-P. Is required for the utilization of anhMurNAc either imported from the medium or derived from its own cell wall murein, and thus plays a role in cell wall recycling. This chain is Anhydro-N-acetylmuramic acid kinase, found in Mesorhizobium japonicum (strain LMG 29417 / CECT 9101 / MAFF 303099) (Mesorhizobium loti (strain MAFF 303099)).